Consider the following 399-residue polypeptide: Phosphoglycerate kinase (399 aa).

Residues 21 to 23 (DFN), arginine 37, 60 to 63 (HLGR), arginine 119, and arginine 152 each bind substrate. Residues lysine 205, glycine 296, glutamate 327, and 353–356 (GGDT) contribute to the ATP site.

This sequence belongs to the phosphoglycerate kinase family. In terms of assembly, monomer.

It localises to the cytoplasm. It catalyses the reaction (2R)-3-phosphoglycerate + ATP = (2R)-3-phospho-glyceroyl phosphate + ADP. Its pathway is carbohydrate degradation; glycolysis; pyruvate from D-glyceraldehyde 3-phosphate: step 2/5. This Sulfurimonas denitrificans (strain ATCC 33889 / DSM 1251) (Thiomicrospira denitrificans (strain ATCC 33889 / DSM 1251)) protein is Phosphoglycerate kinase.